The chain runs to 318 residues: MLSESSSFLKGVMLGSIFCALITMLGHIRIGHGSRMHHHEHHHLQAPNKEDILKISEDERMELSKSFRVYCILLVRPKDVSLWAAVKETWTNHCDKVDFFSSENVKVFESINMETNDMWLMMRKAYKYAFDKYRDQYNWFFLARPTTFAIIENLKYFLLKKDPSQPFYLGHTVKSGDLEYVSMEGGIVLSIESMKRLNSLLSIPEKCPEQGGMIWKISEDKQLAVCLKYAGVFAENAEDSEGKDIFNTKSVGLFIKEAMTNHPNQVVEGCCSDMAVTFNGLTPNQMHVMMYGVYRLRAFGHVFNDALVFLPPNGSDND.

The Cytoplasmic portion of the chain corresponds to 1–6; it reads MLSESS. The chain crosses the membrane as a helical; Signal-anchor for type II membrane protein span at residues 7-26; that stretch reads SFLKGVMLGSIFCALITMLG. Topologically, residues 27 to 318 are lumenal; sequence HIRIGHGSRM…FLPPNGSDND (292 aa).

Belongs to the glycosyltransferase 31 family. Beta3-Gal-T subfamily. Associates with core 1 beta-3-galactosyltransferase (C1GALT1), probably not with the soluble active form.

The protein resides in the membrane. Functionally, probable chaperone required for the generation of 1 O-glycan Gal-beta1-3GalNAc-alpha1-Ser/Thr (T antigen), which is a precursor for many extended O-glycans in glycoproteins. Probably acts as a specific molecular chaperone assisting the folding/stability of core 1 beta-3-galactosyltransferase (C1GALT1). The chain is C1GALT1-specific chaperone 1 (C1GALT1C1) from Bos taurus (Bovine).